We begin with the raw amino-acid sequence, 541 residues long: MAYESLASEPNDGVTDHNDDALYVGIDTLKAARDNIKGWYLYSFSSEPFVVSAVATYVPLLLEQFARINGVQLDDHNAPCSTSSSDKCVLGLFNNRVFVDSSSFALYVFSLSVLFQTVVVISVSGMVDRWKTISFRKNVLVTFGMVGAFATVLISLLNETQYYSLVVYYIVANSCYGVINVVGNSLLPLFVDDLVRLQPDHTVPAAEELSLDTDDKDGLTTVISGRGASIGYSAALVVQLMSILLVRLSPSKQDIQYAVFFVGLWWAVWQFPMYWLLSDSIIPDQQSNQAIANGRYYDIDGSIFTFVNLSSLKYGWKLLGEALKHATLLRDVVIFLIGWFILSDSLTTINSTAIIFAKTELHMSTINLISLSIITMISAMVGAFAIPQIVSTSLHVPPQRTILLIICWASIIPLYGMLGFIFQSFGLKHQFEMFILGVWYGISMGSVAAVSRSLFTIIIPKGRESTFFSLFSITDKGSSIVGPFIIGIVTDKTHNIRYSFFILFILLVFSLPIFKMLNVERGKREAEEISKLHVNIDPIQD.

6 consecutive transmembrane segments (helical) span residues 41–61 (LYSF…VPLL), 103–123 (SFAL…VISV), 139–159 (VLVT…LLNE), 163–183 (YSLV…NVVG), 228–248 (ASIG…LVRL), and 257–277 (YAVF…YWLL). A glycan (N-linked (GlcNAc...) asparagine) is linked at Asn308. 6 consecutive transmembrane segments (helical) span residues 332–352 (VVIF…INST), 366–386 (INLI…AFAI), 402–422 (ILLI…GFIF), 431–451 (FEMF…AAVS), 470–490 (LFSI…GIVT), and 499–519 (SFFI…MLNV).

This sequence belongs to the ATG22 family.

The protein localises to the vacuole membrane. Functionally, vacuolar effluxer which mediate the efflux of amino acids resulting from autophagic degradation. The release of autophagic amino acids allows the maintenance of protein synthesis and viability during nitrogen starvation. This chain is Autophagy-related protein 22 (ATG22), found in Candida glabrata (strain ATCC 2001 / BCRC 20586 / JCM 3761 / NBRC 0622 / NRRL Y-65 / CBS 138) (Yeast).